Here is a 70-residue protein sequence, read N- to C-terminus: Sec-independent protein translocase protein TatA (70 aa).

Residues 1-21 traverse the membrane as a helical segment; sequence MGSFSIWHWLIVLVVVALLFG. Residues 45–70 form a disordered region; the sequence is KGESEQAEDETAKPLPKERDKDSARG.

The protein belongs to the TatA/E family. As to quaternary structure, the Tat system comprises two distinct complexes: a TatABC complex, containing multiple copies of TatA, TatB and TatC subunits, and a separate TatA complex, containing only TatA subunits. Substrates initially bind to the TatABC complex, which probably triggers association of the separate TatA complex to form the active translocon.

The protein resides in the cell inner membrane. Its function is as follows. Part of the twin-arginine translocation (Tat) system that transports large folded proteins containing a characteristic twin-arginine motif in their signal peptide across membranes. TatA could form the protein-conducting channel of the Tat system. This is Sec-independent protein translocase protein TatA from Phenylobacterium zucineum (strain HLK1).